A 259-amino-acid chain; its full sequence is Phosphate import ATP-binding protein PstB 1 (259 aa).

The region spanning 13 to 254 (IQVRGLEFFY…PSKTQTEDYI (242 aa)) is the ABC transporter domain. 45–52 (GPSGCGKS) contacts ATP.

The protein belongs to the ABC transporter superfamily. Phosphate importer (TC 3.A.1.7) family. As to quaternary structure, the complex is composed of two ATP-binding proteins (PstB), two transmembrane proteins (PstC and PstA) and a solute-binding protein (PstS).

The protein resides in the cell inner membrane. It catalyses the reaction phosphate(out) + ATP + H2O = ADP + 2 phosphate(in) + H(+). In terms of biological role, part of the ABC transporter complex PstSACB involved in phosphate import. Responsible for energy coupling to the transport system. This is Phosphate import ATP-binding protein PstB 1 from Pseudomonas savastanoi pv. phaseolicola (strain 1448A / Race 6) (Pseudomonas syringae pv. phaseolicola (strain 1448A / Race 6)).